A 289-amino-acid chain; its full sequence is Urease accessory protein UreD (289 aa).

Belongs to the UreD family. UreD, UreF and UreG form a complex that acts as a GTP-hydrolysis-dependent molecular chaperone, activating the urease apoprotein by helping to assemble the nickel containing metallocenter of UreC. The UreE protein probably delivers the nickel.

The protein localises to the cytoplasm. Functionally, required for maturation of urease via the functional incorporation of the urease nickel metallocenter. In Magnetococcus marinus (strain ATCC BAA-1437 / JCM 17883 / MC-1), this protein is Urease accessory protein UreD.